We begin with the raw amino-acid sequence, 248 residues long: Small ribosomal subunit protein uS2c (248 aa).

It belongs to the universal ribosomal protein uS2 family.

It localises to the plastid. It is found in the chloroplast. This Trachelium caeruleum (Blue throatwort) protein is Small ribosomal subunit protein uS2c (rps2).